A 316-amino-acid chain; its full sequence is MVKKTAGLLVMAYGTPYREDDIERYYTHIRHGRKPPQEQIEDLKARYRAIGGLSPLAKITEEQAKRLEERLNEVQDEVEFRMYLGLKHIEPFIEDAVERMHDDGIKEAVGIVLAPHYSTFSIRSYNERAKAAAKKLGGPTIYTIDQWYDEPKFLQYWAEQVRAIFAAMPERERERAVLIVSAHSLPEKIIQAGDPYPTQLEDTAKRIADQAGVAHYAVGWQSAGQTPEPWLGPDVQDLTRQLYEERGYTSFVYAPVGFVADHLEVLYDNDIECKQVTEEIGARYYRPEMPNTNPLFIDALASVVLKRWAEEGDRHE.

Fe-coproporphyrin III-binding positions include Tyr13, Arg30, 46 to 47 (RY), Ser54, and Tyr125. Fe(2+)-binding residues include His183 and Glu264.

This sequence belongs to the ferrochelatase family.

It is found in the cytoplasm. It catalyses the reaction Fe-coproporphyrin III + 2 H(+) = coproporphyrin III + Fe(2+). The protein operates within porphyrin-containing compound metabolism; protoheme biosynthesis. Functionally, involved in coproporphyrin-dependent heme b biosynthesis. Catalyzes the insertion of ferrous iron into coproporphyrin III to form Fe-coproporphyrin III. The sequence is that of Coproporphyrin III ferrochelatase from Geobacillus kaustophilus (strain HTA426).